We begin with the raw amino-acid sequence, 110 residues long: Phosphoribosyl-ATP pyrophosphatase (110 aa).

It belongs to the PRA-PH family.

It localises to the cytoplasm. It catalyses the reaction 1-(5-phospho-beta-D-ribosyl)-ATP + H2O = 1-(5-phospho-beta-D-ribosyl)-5'-AMP + diphosphate + H(+). Its pathway is amino-acid biosynthesis; L-histidine biosynthesis; L-histidine from 5-phospho-alpha-D-ribose 1-diphosphate: step 2/9. The protein is Phosphoribosyl-ATP pyrophosphatase (hisE) of Azotobacter chroococcum mcd 1.